The chain runs to 1002 residues: Eukaryotic translation initiation factor 5B (1002 aa).

Disordered stretches follow at residues 1–172 (MAKK…GLAA) and 184–402 (EEQE…NKKD). A compositionally biased stretch (acidic residues) spans 13-23 (WDEEFEEDAAQ). Positions 27 to 37 (ISATPTPNPES) are enriched in polar residues. Positions 47–57 (EASASAEGAEA) are enriched in low complexity. 2 stretches are compositionally biased toward basic and acidic residues: residues 75–111 (KKVI…EQAA) and 120–154 (QKEK…ESDK). Residues 155 to 172 (PSASAKKPAKKVPAGLAA) are compositionally biased toward low complexity. Basic and acidic residues-rich tracts occupy residues 184–252 (EEQE…ERRR) and 267–276 (AKKDGEENKP). A compositionally biased stretch (basic residues) spans 277-287 (KKVVYSKKKKR). The span at 297–306 (IKSDSKKDSE) shows a compositional bias: basic and acidic residues. 2 stretches are compositionally biased toward acidic residues: residues 307–342 (VVPD…EETQ) and 352–370 (DQNQ…EEEE). Positions 381-398 (STPAATPAATPTPSSASP) are enriched in low complexity. A tr-type G domain is found at 403–621 (LRSPICCILG…LLELTQKRMS (219 aa)). S405 carries the post-translational modification Phosphoserine. The interval 412-419 (GHVDTGKT) is G1. A K(+)-binding site is contributed by D415. D415 provides a ligand contact to Na(+). GTP contacts are provided by residues 415-420 (DTGKTK), Q431, and 437-439 (GIT). T419 lines the Mg(2+) pocket. K(+) is bound at residue G437. A Na(+)-binding site is contributed by G437. The interval 437–441 (GITQQ) is G2. A Mg(2+)-binding site is contributed by T439. The tract at residues 476–479 (DTPG) is G3. Residues 530–533 (NKID) and 599–600 (AV) contribute to the GTP site. Residues 530–533 (NKID) are G4. Positions 598–600 (SAV) are G5.

It belongs to the TRAFAC class translation factor GTPase superfamily. Classic translation factor GTPase family. IF-2 subfamily. It depends on Na(+) as a cofactor. The cofactor is K(+).

The protein resides in the cytoplasm. The catalysed reaction is GTP + H2O = GDP + phosphate + H(+). In terms of biological role, plays a role in translation initiation. Translational GTPase that catalyzes the joining of the 40S and 60S subunits to form the 80S initiation complex with the initiator methionine-tRNA in the P-site base paired to the start codon. GTP binding and hydrolysis induces conformational changes in the enzyme that renders it active for productive interactions with the ribosome. The release of the enzyme after formation of the initiation complex is a prerequisite to form elongation-competent ribosomes. Stimulates 20S pre-rRNA cleavage to mature 18S rRNA by PIN-domain endonuclease NOB1. This Saccharomyces cerevisiae (strain ATCC 204508 / S288c) (Baker's yeast) protein is Eukaryotic translation initiation factor 5B.